We begin with the raw amino-acid sequence, 239 residues long: Norbelladine 4'-O-methyltransferase 4 (239 aa).

S-adenosyl-L-methionine is bound by residues Val55, Glu77, 79–80 (GV), Ser85, Asp103, and Ala132. Asp155 is an a divalent metal cation binding site. Asp157 is a binding site for S-adenosyl-L-methionine. The a divalent metal cation site is built by Asp181 and Asn182.

This sequence belongs to the class I-like SAM-binding methyltransferase superfamily. Cation-dependent O-methyltransferase family. Mg(2+) is required as a cofactor.

It carries out the reaction norbelladine + S-adenosyl-L-methionine = 4'-O-methylnorbelladine + S-adenosyl-L-homocysteine + H(+). Its pathway is alkaloid biosynthesis. Functionally, 4'-O-methyltransferase converting norbelladine to 4'-O-methylnorbelladine. 4'-O-methylnorbelladine is a precursor to all Amaryllidaceae alkaloids such as galanthamine, lycorine and haemanthamine, and including haemanthamine- and crinamine-type alkaloids, promising anticancer agents. This Narcissus aff. pseudonarcissus MK-2014 (Daffodil) protein is Norbelladine 4'-O-methyltransferase 4.